The following is a 184-amino-acid chain: Large ribosomal subunit protein uL6 (184 aa).

The protein belongs to the universal ribosomal protein uL6 family. In terms of assembly, part of the 50S ribosomal subunit.

In terms of biological role, this protein binds to the 23S rRNA, and is important in its secondary structure. It is located near the subunit interface in the base of the L7/L12 stalk, and near the tRNA binding site of the peptidyltransferase center. This chain is Large ribosomal subunit protein uL6, found in Thermosipho melanesiensis (strain DSM 12029 / CIP 104789 / BI429).